Consider the following 1462-residue polypeptide: DNA topoisomerase 2 (1462 aa).

Residues Asn79, Asn108, 136–138 (SSN), and 149–156 (GRNGYGAK) each bind ATP. The segment at 332–334 (NKK) is interaction with DNA. ATP is bound at residue 365-367 (QTK). The Toprim domain occupies 442–556 (CTLILTEGDS…SLLKVPSFLV (115 aa)). Residues Glu448, Asp525, and Asp527 each contribute to the Mg(2+) site. The region spanning 671–1131 (KDFVNKELIL…PTTSLWLKDL (461 aa)) is the Topo IIA-type catalytic domain. Residue Tyr761 is the O-(5'-phospho-DNA)-tyrosine intermediate of the active site. Residues 947–956 (KLTSTISTSN) are interaction with DNA. 2 disordered regions span residues 1040–1077 (PMPR…SVSV) and 1147–1462 (EDDR…EDDD). Acidic residues predominate over residues 1056–1068 (NDDDSEEQEDAEP). The segment covering 1167–1181 (PAKKPPQPRKNTKKA) has biased composition (basic residues). Residues 1198–1207 (AVEAAKPAEV) are compositionally biased toward low complexity. Over residues 1240 to 1250 (IESSGEKSQAM) the composition is skewed to polar residues. The span at 1260–1275 (AGKKQNNKRGGAKKKS) shows a compositional bias: basic residues. Residues 1282–1300 (SDSDNEVNDVDDDDDDFEE) show a composition bias toward acidic residues. Composition is skewed to low complexity over residues 1314-1334 (KPAA…APAA) and 1419-1430 (APQPARARPQRA). Residues 1442 to 1462 (SESEEDSDEDAELSDFEEDDD) show a composition bias toward acidic residues.

Belongs to the type II topoisomerase family. Homodimer. It depends on Mg(2+) as a cofactor. The cofactor is Mn(2+). Ca(2+) serves as cofactor. Abundant in proliferative tissues.

It catalyses the reaction ATP-dependent breakage, passage and rejoining of double-stranded DNA.. Its function is as follows. Control of topological states of DNA by transient breakage and subsequent rejoining of DNA strands. Topoisomerase II makes double-strand breaks. This is DNA topoisomerase 2 (TOP2) from Pisum sativum (Garden pea).